Here is a 247-residue protein sequence, read N- to C-terminus: Trypsin-2 (247 aa).

A signal peptide spans 1–15; that stretch reads MNLLLILTFVAAAVA. Residues 16–23 constitute a propeptide, activation peptide; it reads APFDDDDK. The 221-residue stretch at 24-244 folds into the Peptidase S1 domain; that stretch reads IVGGYICEEN…YVDWIKDTIA (221 aa). 4 disulfide bridges follow: Cys30-Cys160, Cys48-Cys64, Cys171-Cys185, and Cys196-Cys220. His63 serves as the catalytic Charge relay system. Glu75, Asn77, Val80, and Glu85 together coordinate Ca(2+). Asp107 (charge relay system) is an active-site residue. The residue at position 154 (Tyr154) is a Sulfotyrosine. The active-site Charge relay system is the Ser200.

It belongs to the peptidase S1 family. The cofactor is Ca(2+). Post-translationally, sulfated on tyrosine. In terms of processing, sulfation at Tyr-154 increases selectivity towards basic versus apolar residues at the P2' position of inhibitors that bind in a substrate-like fashion. Although the increase in selectivity is relatively small, it may facilitate digestion of a broader range of dietary proteins. As to expression, expressed in Paneth cells, at the base of small intestinal crypts.

It is found in the secreted. The protein localises to the extracellular space. The enzyme catalyses Preferential cleavage: Arg-|-Xaa, Lys-|-Xaa.. In terms of biological role, in the ileum, may be involved in defensin processing, including DEFA5. In Homo sapiens (Human), this protein is Trypsin-2 (PRSS2).